The chain runs to 555 residues: 6-phosphofructo-2-kinase/fructose-2,6-bisphosphatase 3 (555 aa).

Residues 1-245 (MPLELTQSRV…VYYLMNIHVQ (245 aa)) are 6-phosphofructo-2-kinase. An ATP-binding site is contributed by 42-50 (GLPARGKTY). Positions 75 and 99 each coordinate beta-D-fructose 6-phosphate. Residue aspartate 125 is part of the active site. Positions 127 and 133 each coordinate beta-D-fructose 6-phosphate. Residue cysteine 155 is part of the active site. 164–169 (NIMEVK) serves as a coordination point for ATP. Residues lysine 169, arginine 190, and tyrosine 194 each coordinate beta-D-fructose 6-phosphate. The tract at residues 246-555 (PRTIYLCRHG…CHIFSKFSPY (310 aa)) is fructose-2,6-bisphosphatase. Residue arginine 253 participates in beta-D-fructose 2,6-bisphosphate binding. The active-site Tele-phosphohistidine intermediate is histidine 254. Positions 260 and 266 each coordinate beta-D-fructose 2,6-bisphosphate. Glutamate 323 acts as the Proton donor/acceptor in catalysis. Residues tyrosine 334, arginine 348, lysine 352, tyrosine 363, glutamine 389, and arginine 393 each contribute to the beta-D-fructose 2,6-bisphosphate site. Residue 345-348 (YALR) coordinates ATP. ATP is bound by residues 389-393 (QAVLR) and tyrosine 425. Residues 475 to 504 (KQDAKKGPNPLMRRNSVTPLASPEPTKKPR) form a disordered region. Position 490 is a phosphoserine; by AMPK and PKA (serine 490). A Phosphothreonine modification is found at threonine 492. Phosphoserine is present on serine 496.

This sequence in the C-terminal section; belongs to the phosphoglycerate mutase family. Homodimer. Forms a heterodimer with PFKFB2. In terms of processing, phosphorylation by AMPK stimulates activity.

The catalysed reaction is beta-D-fructose 2,6-bisphosphate + H2O = beta-D-fructose 6-phosphate + phosphate. It catalyses the reaction beta-D-fructose 6-phosphate + ATP = beta-D-fructose 2,6-bisphosphate + ADP + H(+). Functionally, catalyzes both the synthesis and degradation of fructose 2,6-bisphosphate. This chain is 6-phosphofructo-2-kinase/fructose-2,6-bisphosphatase 3 (Pfkfb3), found in Rattus norvegicus (Rat).